Here is a 330-residue protein sequence, read N- to C-terminus: Tryptophan--tRNA ligase (330 aa).

ATP-binding positions include 9–11 (QPT) and 17–18 (GN). A 'HIGH' region motif is present at residues 10 to 18 (PTGDPHIGN). An L-tryptophan-binding site is contributed by D136. ATP contacts are provided by residues 148-150 (GED), I187, and 195-199 (KMSKS). Residues 195 to 199 (KMSKS) carry the 'KMSKS' region motif.

This sequence belongs to the class-I aminoacyl-tRNA synthetase family. As to quaternary structure, homodimer.

The protein localises to the cytoplasm. The enzyme catalyses tRNA(Trp) + L-tryptophan + ATP = L-tryptophyl-tRNA(Trp) + AMP + diphosphate + H(+). Functionally, catalyzes the attachment of tryptophan to tRNA(Trp). This chain is Tryptophan--tRNA ligase, found in Deinococcus radiodurans (strain ATCC 13939 / DSM 20539 / JCM 16871 / CCUG 27074 / LMG 4051 / NBRC 15346 / NCIMB 9279 / VKM B-1422 / R1).